We begin with the raw amino-acid sequence, 222 residues long: Peptide methionine sulfoxide reductase MsrA (222 aa).

The active site involves C60.

The protein belongs to the MsrA Met sulfoxide reductase family.

The enzyme catalyses L-methionyl-[protein] + [thioredoxin]-disulfide + H2O = L-methionyl-(S)-S-oxide-[protein] + [thioredoxin]-dithiol. It carries out the reaction [thioredoxin]-disulfide + L-methionine + H2O = L-methionine (S)-S-oxide + [thioredoxin]-dithiol. Its function is as follows. Has an important function as a repair enzyme for proteins that have been inactivated by oxidation. Catalyzes the reversible oxidation-reduction of methionine sulfoxide in proteins to methionine. The polypeptide is Peptide methionine sulfoxide reductase MsrA (Pseudomonas entomophila (strain L48)).